Here is an 88-residue protein sequence, read N- to C-terminus: MGFFKGLSSRPTPKQVAKDRLKLILIHDRGEIPTDTLEKIRKEILGVISKYIEIQVDDVEISVNKSEDMEGENTSALIASIPIKSIRR.

The protein belongs to the MinE family.

Functionally, prevents the cell division inhibition by proteins MinC and MinD at internal division sites while permitting inhibition at polar sites. This ensures cell division at the proper site by restricting the formation of a division septum at the midpoint of the long axis of the cell. The polypeptide is Cell division topological specificity factor (Clostridium botulinum (strain Alaska E43 / Type E3)).